Reading from the N-terminus, the 164-residue chain is MKIIGIDPGLRNMGWGVIAVEGPRLRHLDNGIVHSEAGDLGPRLAALYRGLCAVIVRHAPDAAAVEQTFVNKDALGTLKLGQARGIALLAPAEAGLEIGEYAPNAVKKAVVGVGHAAKEQIQHMVRFMLPGVEFAGPDAADALAVAICHAHHLQGRALRIKASA.

Residues aspartate 7, glutamate 66, and aspartate 138 contribute to the active site. Mg(2+) is bound by residues aspartate 7, glutamate 66, and aspartate 138.

The protein belongs to the RuvC family. In terms of assembly, homodimer which binds Holliday junction (HJ) DNA. The HJ becomes 2-fold symmetrical on binding to RuvC with unstacked arms; it has a different conformation from HJ DNA in complex with RuvA. In the full resolvosome a probable DNA-RuvA(4)-RuvB(12)-RuvC(2) complex forms which resolves the HJ. Requires Mg(2+) as cofactor.

It localises to the cytoplasm. The catalysed reaction is Endonucleolytic cleavage at a junction such as a reciprocal single-stranded crossover between two homologous DNA duplexes (Holliday junction).. The RuvA-RuvB-RuvC complex processes Holliday junction (HJ) DNA during genetic recombination and DNA repair. Endonuclease that resolves HJ intermediates. Cleaves cruciform DNA by making single-stranded nicks across the HJ at symmetrical positions within the homologous arms, yielding a 5'-phosphate and a 3'-hydroxyl group; requires a central core of homology in the junction. The consensus cleavage sequence is 5'-(A/T)TT(C/G)-3'. Cleavage occurs on the 3'-side of the TT dinucleotide at the point of strand exchange. HJ branch migration catalyzed by RuvA-RuvB allows RuvC to scan DNA until it finds its consensus sequence, where it cleaves and resolves the cruciform DNA. The sequence is that of Crossover junction endodeoxyribonuclease RuvC from Paracoccus denitrificans (strain Pd 1222).